The chain runs to 372 residues: MTSIEPTHTGKKVIVGMSGGVDSSVSAYLLMQQGYQVEGLFMKNWEEDDNNEYCAAAEDLKDAQAVCDKLGIKLHTVNFAAEYWDNVFEYFLAEYKAGRTPNPDIMCNKEIKFKAFLEFADEILDADYIAMGHYVRRRDNTDGSTQMLRGVDGNKDQSYFLYTLSHEQVARSLFPVGELEKHEVREIAKEMGLITHDKKDSTGICFIGERKFTEFLGTYLPAQPGNIETPEGEVIGTHQGLMYHTLGQRKGLGIGGMKNSNDDPWYVVDKDLERNVLIVGQGGHHPRLMSTGMTVNQLHWVDRTGPIDGCHIAVKTRYRQQDVPCTLTYTDEHTLRVVFDEPVAAVTPGQSAVFYDGEVCLGGGIIDQLIRG.

ATP is bound by residues 16-23 (GMSGGVDS) and Met42. Residues 102-104 (NPD) are interaction with target base in tRNA. Residue Cys107 is the Nucleophile of the active site. Residues Cys107 and Cys205 are joined by a disulfide bond. Position 132 (Gly132) interacts with ATP. The interval 155–157 (KDQ) is interaction with tRNA. Catalysis depends on Cys205, which acts as the Cysteine persulfide intermediate. Residues 317 to 318 (RY) are interaction with tRNA.

It belongs to the MnmA/TRMU family.

The protein localises to the cytoplasm. It carries out the reaction S-sulfanyl-L-cysteinyl-[protein] + uridine(34) in tRNA + AH2 + ATP = 2-thiouridine(34) in tRNA + L-cysteinyl-[protein] + A + AMP + diphosphate + H(+). Functionally, catalyzes the 2-thiolation of uridine at the wobble position (U34) of tRNA, leading to the formation of s(2)U34. This chain is tRNA-specific 2-thiouridylase MnmA, found in Shewanella baltica (strain OS195).